A 379-amino-acid polypeptide reads, in one-letter code: Homoserine O-acetyltransferase (379 aa).

Residues 1 to 24 (MSHDTTPPLPATGAWREGDPPGDR) form a disordered region. Residues 60 to 365 (NAVLVLHALT…ASGHDGFLTE (306 aa)) enclose the AB hydrolase-1 domain. The active-site Nucleophile is serine 165. Arginine 236 contributes to the substrate binding site. Residues aspartate 329 and histidine 359 contribute to the active site. Aspartate 360 is a substrate binding site.

The protein belongs to the AB hydrolase superfamily. MetX family. In terms of assembly, homodimer.

It localises to the cytoplasm. The enzyme catalyses L-homoserine + acetyl-CoA = O-acetyl-L-homoserine + CoA. Its pathway is amino-acid biosynthesis; L-methionine biosynthesis via de novo pathway; O-acetyl-L-homoserine from L-homoserine: step 1/1. Transfers an acetyl group from acetyl-CoA to L-homoserine, forming acetyl-L-homoserine. This Thermobifida fusca (strain YX) protein is Homoserine O-acetyltransferase.